The primary structure comprises 293 residues: Glutamyl-Q tRNA(Asp) synthetase (293 aa).

L-glutamate-binding positions include 26–30 (RYAPS) and aspartate 62. The 'HIGH' region signature appears at 29–39 (PSPTGALHLGN). 4 residues coordinate Zn(2+): cysteine 118, cysteine 120, tyrosine 131, and cysteine 135. Residues tyrosine 178 and arginine 196 each coordinate L-glutamate. The 'KMSKS' region motif lies at 234–238 (KLSKR). An ATP-binding site is contributed by lysine 237.

It belongs to the class-I aminoacyl-tRNA synthetase family. GluQ subfamily. The cofactor is Zn(2+).

In terms of biological role, catalyzes the tRNA-independent activation of glutamate in presence of ATP and the subsequent transfer of glutamate onto a tRNA(Asp). Glutamate is transferred on the 2-amino-5-(4,5-dihydroxy-2-cyclopenten-1-yl) moiety of the queuosine in the wobble position of the QUC anticodon. In Parasynechococcus marenigrum (strain WH8102), this protein is Glutamyl-Q tRNA(Asp) synthetase.